We begin with the raw amino-acid sequence, 276 residues long: 2-dehydro-3-deoxyphosphooctonate aldolase (276 aa).

This sequence belongs to the KdsA family.

It localises to the cytoplasm. The enzyme catalyses D-arabinose 5-phosphate + phosphoenolpyruvate + H2O = 3-deoxy-alpha-D-manno-2-octulosonate-8-phosphate + phosphate. It functions in the pathway carbohydrate biosynthesis; 3-deoxy-D-manno-octulosonate biosynthesis; 3-deoxy-D-manno-octulosonate from D-ribulose 5-phosphate: step 2/3. The protein operates within bacterial outer membrane biogenesis; lipopolysaccharide biosynthesis. The polypeptide is 2-dehydro-3-deoxyphosphooctonate aldolase (Helicobacter acinonychis (strain Sheeba)).